A 337-amino-acid chain; its full sequence is Cytochrome P450 monooxygenase dpmpJ (337 aa).

Residues L4 to L24 traverse the membrane as a helical segment. N-linked (GlcNAc...) asparagine glycosylation occurs at N158.

The protein belongs to the cytochrome P450 family. Heme is required as a cofactor.

The protein resides in the membrane. Its pathway is secondary metabolite biosynthesis; terpenoid biosynthesis. In terms of biological role, cytochrome P450 monooxygenase; part of the gene cluster that mediates the biosynthesis of diterpenoid pyrones. The first step of the pathway is the synthesis of the alpha-pyrone moiety by the polyketide synthase dpmpA via condensation of one acetyl-CoA starter unit with 3 malonyl-CoA units and 2 methylations. The alpha-pyrone is then combined with geranylgeranyl pyrophosphate (GGPP) formed by the GGPP synthase dpmpD through the action of the prenyltransferase dpmpC to yield a linear alpha-pyrone diterpenoid. Subsequent steps in the diterpenoid pyrone biosynthetic pathway involve the decalin core formation, which is initiated by the epoxidation of the C10-C11 olefin by the FAD-dependent oxidoreductase dpmpE, and is followed by a cyclization cascade catalyzed by the terpene cyclase dpmpB. The short chain dehydrogenase/reductase dpmpG then oxidizes the 8S hydroxy group to a ketone and the short chain dehydrogenase/reductase dpmpH reduces the ketone to the 8R hydroxy group to yield higginsianin B. Higginsianin B is further methylated by the methyltransferase dpmpI to produce the intermediate named FDDP B. The cytochrome P450 monooxygenase dpmpJ then oxidizes the C-26 methyl to primary alcohol, producing the final diterpenoid pyrone with a C-26 primary alcohol on the gamma-pyrone moiety named FDDP C. This is Cytochrome P450 monooxygenase dpmpJ from Macrophomina phaseolina (strain MS6) (Charcoal rot fungus).